The sequence spans 238 residues: Polynucleotide 3'-phosphatase (238 aa).

It belongs to the DNA 3' phosphatase family.

The protein resides in the nucleus. The enzyme catalyses a 3'end (2'-deoxyribonucleotide 3'-phosphate)-DNA + H2O = a 3'-end 2'-deoxyribonucleotide-DNA + phosphate. Functionally, dephosphorylate DNA's 3'-phosphate termini. Has a role in the repair of breaks in single-stranded DNA. This chain is Polynucleotide 3'-phosphatase (TPP1), found in Saccharomyces cerevisiae (strain ATCC 204508 / S288c) (Baker's yeast).